The chain runs to 384 residues: Ribosomal RNA small subunit methyltransferase H (384 aa).

S-adenosyl-L-methionine contacts are provided by residues 99-101 (GGH), D118, Y145, D169, and Q176.

This sequence belongs to the methyltransferase superfamily. RsmH family.

It localises to the cytoplasm. The enzyme catalyses cytidine(1402) in 16S rRNA + S-adenosyl-L-methionine = N(4)-methylcytidine(1402) in 16S rRNA + S-adenosyl-L-homocysteine + H(+). Specifically methylates the N4 position of cytidine in position 1402 (C1402) of 16S rRNA. The chain is Ribosomal RNA small subunit methyltransferase H from Mycobacteroides abscessus (strain ATCC 19977 / DSM 44196 / CCUG 20993 / CIP 104536 / JCM 13569 / NCTC 13031 / TMC 1543 / L948) (Mycobacterium abscessus).